A 390-amino-acid polypeptide reads, in one-letter code: MAVKVLVVDDSGFFRRRVTEILSSDPNIVVVGTATNGKEAIEQALALKPDVITMDYEMPMMDGITAVRHIMQRIPTPVLMFSSLTHEGARVTLDALDAGAVDFLPKNFEDISRNPQKVKQLLCEKINSISRSNRRSSGIGSASAASPAPAAPAPSTLSSRAPAPSAAAPARAVPSRTVAPAAAPAAHAHHTPAHPTTTGTAKRKAYKLVAIGTSTGGPVALQRVLTQLPANFPAPLVLIQHMPAAFTKAFAERLDKLCKISVKEAEDGDVLRPGLALLAPGGKQMMVDSRGTVKILPGDERLNYKPCVDITFGSAAKSYGDKVLSVVLTGMGADGREGARLLKQVGSTVWAQDEASCVIYGMPMAIVKAELADAIYSLDDIGRHLVEACL.

One can recognise a Response regulatory domain in the interval 4–121 (KVLVVDDSGF…SRNPQKVKQL (118 aa)). Aspartate 55 carries the 4-aspartylphosphate modification. Residues 132–186 (SNRRSSGIGSASAASPAPAAPAPSTLSSRAPAPSAAAPARAVPSRTVAPAAAPAA) show a composition bias toward low complexity. The interval 132 to 201 (SNRRSSGIGS…PAHPTTTGTA (70 aa)) is disordered. Positions 195-387 (PTTTGTAKRK…LDDIGRHLVE (193 aa)) constitute a CheB-type methylesterase domain. Catalysis depends on residues serine 214, histidine 241, and aspartate 334.

The protein belongs to the CheB family. Phosphorylated by CheA. Phosphorylation of the N-terminal regulatory domain activates the methylesterase activity.

It is found in the cytoplasm. The enzyme catalyses [protein]-L-glutamate 5-O-methyl ester + H2O = L-glutamyl-[protein] + methanol + H(+). The catalysed reaction is L-glutaminyl-[protein] + H2O = L-glutamyl-[protein] + NH4(+). Functionally, involved in chemotaxis. Part of a chemotaxis signal transduction system that modulates chemotaxis in response to various stimuli. Catalyzes the demethylation of specific methylglutamate residues introduced into the chemoreceptors (methyl-accepting chemotaxis proteins or MCP) by CheR. Also mediates the irreversible deamidation of specific glutamine residues to glutamic acid. The polypeptide is Protein-glutamate methylesterase/protein-glutamine glutaminase 1 (Pseudomonas syringae pv. tomato (strain ATCC BAA-871 / DC3000)).